The primary structure comprises 714 residues: G protein-coupled receptor kinase 2 (714 aa).

Residues 1–308 (MELENIVANT…LEAQPITYKT (308 aa)) form an N-terminal region. RGS domains follow at residues 53–174 (YGYV…SQHS) and 177–294 (INHK…HRYL). The disordered stretch occupies residues 141–229 (SNANPTETAE…GGGEGGGGGK (89 aa)). Residues 154 to 175 (CNNTTANNCNNINNSNNSQHSS) show a composition bias toward low complexity. Composition is skewed to basic and acidic residues over residues 176-190 (DINHKKLDTRNHNGD) and 199-220 (HQDDGDESVKCQEGHDDAEKGG). A Protein kinase domain is found at 309–574 (FRMYRVLGKG…GQDVMAHPFF (266 aa)). Residues 315–323 (LGKGGFGEV) and Lys338 each bind ATP. The Proton acceptor role is filled by Asp435. Residues 577–642 (TQLNWRRLEA…GSVSISWQNE (66 aa)) enclose the AGC-kinase C-terminal domain. Ser612 is modified (phosphoserine). Thr613 bears the Phosphothreonine mark. The disordered stretch occupies residues 667–714 (INAAPEPDKAGCFPFRRKKKQPARTQPIPIPEHLLTTSHSVSSTTVES). Residues 698–714 (EHLLTTSHSVSSTTVES) show a composition bias toward low complexity.

The protein belongs to the protein kinase superfamily. AGC Ser/Thr protein kinase family. GPRK subfamily. As to expression, expressed in all larval tissues and in adult ovaries. Larval CNS staining is localized to axons projecting to the optic lobes and the mushroom bodies, in the longitudinal connectives, and in cell bodies and nerves of the ring gland corpus allatum. Adult CNS staining is detectable only in cell bodies and processes associated with the ellipsoid body of the central complex and portions of the mushroom bodies. In the wing disk, expression is confined to a stripe that parallels the anterior/posterior boundary of the wing blade and the hinge region, and weak expression in the prospective notum.

The protein localises to the membrane. The enzyme catalyses [G-protein-coupled receptor] + ATP = [G-protein-coupled receptor]-phosphate + ADP + H(+). Functionally, specifically phosphorylates the activated forms of G protein-coupled receptors. Required during oogenesis and embryogenesis; component of a signaling pathway that functions during egg chamber maturation. In Drosophila melanogaster (Fruit fly), this protein is G protein-coupled receptor kinase 2 (Gprk2).